The following is an 87-amino-acid chain: Small ribosomal subunit protein uS17 (87 aa).

The protein belongs to the universal ribosomal protein uS17 family. As to quaternary structure, part of the 30S ribosomal subunit.

One of the primary rRNA binding proteins, it binds specifically to the 5'-end of 16S ribosomal RNA. The sequence is that of Small ribosomal subunit protein uS17 from Staphylococcus aureus (strain JH1).